The chain runs to 410 residues: Peptidase T (410 aa).

Residue histidine 79 participates in Zn(2+) binding. Aspartate 81 is a catalytic residue. Aspartate 142 is a Zn(2+) binding site. Glutamate 176 serves as the catalytic Proton acceptor. Positions 177, 199, and 381 each coordinate Zn(2+).

This sequence belongs to the peptidase M20B family. Zn(2+) serves as cofactor.

It is found in the cytoplasm. It catalyses the reaction Release of the N-terminal residue from a tripeptide.. Cleaves the N-terminal amino acid of tripeptides. This Bacillus licheniformis (strain ATCC 14580 / DSM 13 / JCM 2505 / CCUG 7422 / NBRC 12200 / NCIMB 9375 / NCTC 10341 / NRRL NRS-1264 / Gibson 46) protein is Peptidase T.